The primary structure comprises 144 residues: 3-hydroxyacyl-[acyl-carrier-protein] dehydratase FabZ (144 aa).

The active site involves H49.

Belongs to the thioester dehydratase family. FabZ subfamily.

It is found in the cytoplasm. The catalysed reaction is a (3R)-hydroxyacyl-[ACP] = a (2E)-enoyl-[ACP] + H2O. Functionally, involved in unsaturated fatty acids biosynthesis. Catalyzes the dehydration of short chain beta-hydroxyacyl-ACPs and long chain saturated and unsaturated beta-hydroxyacyl-ACPs. The sequence is that of 3-hydroxyacyl-[acyl-carrier-protein] dehydratase FabZ from Clostridium kluyveri (strain NBRC 12016).